A 288-amino-acid chain; its full sequence is NAD(P)H-hydrate epimerase (288 aa).

The N-terminal 32 residues, 1 to 32 (MSGLRALLGLGLLVAGSRLSRVRVQAGSCRAG), are a transit peptide targeting the mitochondrion. A Phosphoserine modification is found at S49. The YjeF N-terminal domain maps to 65-275 (AQAVDQELFN…ALEKKYQLNL (211 aa)). 119–123 (NNGGD) provides a ligand contact to (6S)-NADPHX. N120 lines the K(+) pocket. K144 carries the post-translational modification N6-succinyllysine. Residue D185 participates in K(+) binding. Residues 189–195 (GFSFTGE) and D218 each bind (6S)-NADPHX. S221 contacts K(+).

This sequence belongs to the NnrE/AIBP family. As to quaternary structure, homodimer. Interacts with APOA1 and APOA2. Requires K(+) as cofactor. Post-translationally, undergoes physiological phosphorylation during sperm capacitation, downstream to PKA activation.

The protein localises to the mitochondrion. The protein resides in the secreted. It carries out the reaction (6R)-NADHX = (6S)-NADHX. The catalysed reaction is (6R)-NADPHX = (6S)-NADPHX. Functionally, catalyzes the epimerization of the S- and R-forms of NAD(P)HX, a damaged form of NAD(P)H that is a result of enzymatic or heat-dependent hydration. This is a prerequisite for the S-specific NAD(P)H-hydrate dehydratase to allow the repair of both epimers of NAD(P)HX. Accelerates cholesterol efflux from endothelial cells to high-density lipoprotein (HDL) and thereby regulates angiogenesis. The chain is NAD(P)H-hydrate epimerase from Bos taurus (Bovine).